A 344-amino-acid polypeptide reads, in one-letter code: MYSRKINMIILGIESSCDDTSAAVVIDGTAIQSNVISGQEEIHNCFGGVVPELASRSHLSAIQPVVEKALSDAKISLDDIDLIATTQGPGLSGSLLVGYSYAKSLSLVKKIPFVGVDHMAGHALAILLEEETPDFPFIALTASGGTSSIFLVKSSTDFELLGRTRDDAAGEAFDKVAKVLGLPYPGGPHIAAHAETGDEKSIKFPRAWLDKDGFDFSFSGLKTAVLNYHNKIVQKNGSITKEERADICASFQQAVIDVLVTKTINAARTHGISTVVLGGGVSSNRALRLAFSHECDKCKLQFFVPAAKLCTDNAAMIAVAGYHKYLRFGPGNLSDDVYSRSQLG.

Residues His-118 and His-122 each contribute to the Fe cation site. Residues 141–145 (TASGG), Asp-174, Gly-187, and Asn-284 each bind substrate. Asp-312 contributes to the Fe cation binding site.

This sequence belongs to the KAE1 / TsaD family. It depends on Fe(2+) as a cofactor.

The protein resides in the cytoplasm. The catalysed reaction is L-threonylcarbamoyladenylate + adenosine(37) in tRNA = N(6)-L-threonylcarbamoyladenosine(37) in tRNA + AMP + H(+). In terms of biological role, required for the formation of a threonylcarbamoyl group on adenosine at position 37 (t(6)A37) in tRNAs that read codons beginning with adenine. Is involved in the transfer of the threonylcarbamoyl moiety of threonylcarbamoyl-AMP (TC-AMP) to the N6 group of A37, together with TsaE and TsaB. TsaD likely plays a direct catalytic role in this reaction. This chain is tRNA N6-adenosine threonylcarbamoyltransferase, found in Desulfotalea psychrophila (strain LSv54 / DSM 12343).